The chain runs to 499 residues: Rhamnogalacturonan I rhamnosyltransferase 1 (499 aa).

The chain crosses the membrane as a helical; Signal-anchor for type II membrane protein span at residues 31–50 (WFVRVCSSILVWTCLVQLFA). N-linked (GlcNAc...) asparagine glycosylation is found at N88, N121, and N207. Position 261 to 263 (261 to 263 (HLR)) interacts with substrate. N375, N435, and N496 each carry an N-linked (GlcNAc...) asparagine glycan.

It belongs to the glycosyltransferase GT106 family.

It is found in the golgi apparatus membrane. The enzyme catalyses alpha-D-galacturonosyl-[(1-&gt;2)-alpha-L-rhamnosyl-(1-&gt;4)-alpha-D-galacturonosyl](n) + UDP-beta-L-rhamnose = [(1-&gt;2)-alpha-L-rhamnosyl-(1-&gt;4)-alpha-D-galacturonosyl](n+1) + UDP + H(+). It functions in the pathway glycan metabolism; pectin biosynthesis. Functionally, glycosyltransferase involved in the formation of rhamnogalacturonan I (RG-I) oligosaccharides in the seed coat mucilage, which is a specialized cell wall with abundant RG-I. Transfers the rhamnose residue from UDP-beta-L-rhamnose to RG-I oligosaccharides. The polypeptide is Rhamnogalacturonan I rhamnosyltransferase 1 (Arabidopsis thaliana (Mouse-ear cress)).